Reading from the N-terminus, the 453-residue chain is GTPase Der (453 aa).

EngA-type G domains are found at residues 4-169 and 178-353; these read PIVA…PPAD and IGVA…EQHR. Residues 10 to 17, 57 to 61, 120 to 123, 184 to 191, 231 to 235, and 296 to 299 each bind GTP; these read GRPNVGKS, DTGGL, NKCE, DTAGI, and NKWD. Residues 354-439 form the KH-like domain; sequence RRVGTSVINE…PIRLFWRGKK (86 aa).

Belongs to the TRAFAC class TrmE-Era-EngA-EngB-Septin-like GTPase superfamily. EngA (Der) GTPase family. As to quaternary structure, associates with the 50S ribosomal subunit.

In terms of biological role, GTPase that plays an essential role in the late steps of ribosome biogenesis. This chain is GTPase Der, found in Synechococcus sp. (strain ATCC 27144 / PCC 6301 / SAUG 1402/1) (Anacystis nidulans).